The primary structure comprises 159 residues: MKITILAVGKLKEKYWKQAIAEYEKRLGPYTKIDIIEVTDEKAPENMSDKEIEQVKEKEGQRILAKIKPQSTVITLEIQGKMLSSEGLAQELNQRMTQGQSDFVFVIGGSNGLHKDVLQRSNYALSFSKMTFPHQMMRVVLIEQVYRAFKIMRGEAYHK.

S-adenosyl-L-methionine-binding positions include Leu-76, Gly-108, and 127–132 (FSKMTF).

It belongs to the RNA methyltransferase RlmH family. As to quaternary structure, homodimer.

It is found in the cytoplasm. It catalyses the reaction pseudouridine(1915) in 23S rRNA + S-adenosyl-L-methionine = N(3)-methylpseudouridine(1915) in 23S rRNA + S-adenosyl-L-homocysteine + H(+). In terms of biological role, specifically methylates the pseudouridine at position 1915 (m3Psi1915) in 23S rRNA. The sequence is that of Ribosomal RNA large subunit methyltransferase H from Staphylococcus aureus (strain MSSA476).